A 304-amino-acid chain; its full sequence is Acetyl-coenzyme A carboxylase carboxyl transferase subunit beta (304 aa).

Residues 23–292 enclose the CoA carboxyltransferase N-terminal domain; the sequence is VWTKCDSCGQ…PNPDAPREGV (270 aa). 4 residues coordinate Zn(2+): cysteine 27, cysteine 30, cysteine 46, and cysteine 49. The segment at 27–49 adopts a C4-type zinc-finger fold; that stretch reads CDSCGQVLYRAELERNLEVCPKC. The segment at 284-304 is disordered; the sequence is NPDAPREGVVVPPAPGQESEA.

Belongs to the AccD/PCCB family. Acetyl-CoA carboxylase is a heterohexamer composed of biotin carboxyl carrier protein (AccB), biotin carboxylase (AccC) and two subunits each of ACCase subunit alpha (AccA) and ACCase subunit beta (AccD). It depends on Zn(2+) as a cofactor.

Its subcellular location is the cytoplasm. It carries out the reaction N(6)-carboxybiotinyl-L-lysyl-[protein] + acetyl-CoA = N(6)-biotinyl-L-lysyl-[protein] + malonyl-CoA. Its pathway is lipid metabolism; malonyl-CoA biosynthesis; malonyl-CoA from acetyl-CoA: step 1/1. Component of the acetyl coenzyme A carboxylase (ACC) complex. Biotin carboxylase (BC) catalyzes the carboxylation of biotin on its carrier protein (BCCP) and then the CO(2) group is transferred by the transcarboxylase to acetyl-CoA to form malonyl-CoA. This Salmonella arizonae (strain ATCC BAA-731 / CDC346-86 / RSK2980) protein is Acetyl-coenzyme A carboxylase carboxyl transferase subunit beta.